A 405-amino-acid polypeptide reads, in one-letter code: Argininosuccinate synthase (405 aa).

Residue 11 to 19 participates in ATP binding; the sequence is AYSGGLDTS. Y90 lines the L-citrulline pocket. Position 119 (G119) interacts with ATP. L-aspartate-binding residues include T121, N125, and D126. An L-citrulline-binding site is contributed by N125. The L-citrulline site is built by R129, S178, S187, E263, and Y275.

It belongs to the argininosuccinate synthase family. Type 1 subfamily. Homotetramer.

Its subcellular location is the cytoplasm. The enzyme catalyses L-citrulline + L-aspartate + ATP = 2-(N(omega)-L-arginino)succinate + AMP + diphosphate + H(+). Its pathway is amino-acid biosynthesis; L-arginine biosynthesis; L-arginine from L-ornithine and carbamoyl phosphate: step 2/3. The sequence is that of Argininosuccinate synthase from Legionella pneumophila subsp. pneumophila (strain Philadelphia 1 / ATCC 33152 / DSM 7513).